A 283-amino-acid polypeptide reads, in one-letter code: Pantothenate synthetase (283 aa).

Residue 30–37 (MGNLHSGH) participates in ATP binding. His37 serves as the catalytic Proton donor. Gln61 provides a ligand contact to (R)-pantoate. Beta-alanine is bound at residue Gln61. 149–152 (GEKD) contacts ATP. Gln155 serves as a coordination point for (R)-pantoate. Residues Val178 and 186-189 (LSSR) each bind ATP.

Belongs to the pantothenate synthetase family. Homodimer.

It localises to the cytoplasm. The enzyme catalyses (R)-pantoate + beta-alanine + ATP = (R)-pantothenate + AMP + diphosphate + H(+). The protein operates within cofactor biosynthesis; (R)-pantothenate biosynthesis; (R)-pantothenate from (R)-pantoate and beta-alanine: step 1/1. Catalyzes the condensation of pantoate with beta-alanine in an ATP-dependent reaction via a pantoyl-adenylate intermediate. This Pseudomonas savastanoi pv. phaseolicola (strain 1448A / Race 6) (Pseudomonas syringae pv. phaseolicola (strain 1448A / Race 6)) protein is Pantothenate synthetase.